The primary structure comprises 209 residues: Casparian strip membrane protein 1 (209 aa).

Positions 1–35 are disordered; the sequence is MKTGESTAIDIAPETNNSGPIGKKKSTTPLLAAPV. Residues 1-46 lie on the Cytoplasmic side of the membrane; sequence MKTGESTAIDIAPETNNSGPIGKKKSTTPLLAAPVPDRGTHRMKRG. The helical transmembrane segment at 47 to 67 threads the bilayer; sequence LAIFDFVLRIGVLASALAAAA. At 68–96 the chain is on the extracellular side; it reads AMGTSEQTLPFFTQFFQFEASYDDLPTFQ. The helical transmembrane segment at 97–117 threads the bilayer; it reads FFVVAMAVVAGYVVLSIPFSI. Residues 118–129 lie on the Cytoplasmic side of the membrane; that stretch reads VCIIRPHAAGPR. Residues 130-150 form a helical membrane-spanning segment; that stretch reads VLLLILDSVALTLNTAAAGAA. Residues 151-182 are Extracellular-facing; the sequence is AAVVSLAHSGNSSTNWLAICNQFGDFCQQASG. N-linked (GlcNAc...) asparagine glycosylation occurs at asparagine 161. A helical transmembrane segment spans residues 183–203; that stretch reads AVVGSFAAVLLFLLLILFSAL. Over 204-209 the chain is Cytoplasmic; it reads SLKNSH.

This sequence belongs to the Casparian strip membrane proteins (CASP) family. Homodimer and heterodimers.

The protein localises to the cell membrane. Regulates membrane-cell wall junctions and localized cell wall deposition. Required for establishment of the Casparian strip membrane domain (CSD) and the subsequent formation of Casparian strips, a cell wall modification of the root endodermis that determines an apoplastic barrier between the intraorganismal apoplasm and the extraorganismal apoplasm and prevents lateral diffusion. The polypeptide is Casparian strip membrane protein 1 (Cucumis melo (Muskmelon)).